A 297-amino-acid polypeptide reads, in one-letter code: 33 kDa chaperonin (297 aa).

Cystine bridges form between Cys232–Cys234 and Cys266–Cys269.

The protein belongs to the HSP33 family. Under oxidizing conditions two disulfide bonds are formed involving the reactive cysteines. Under reducing conditions zinc is bound to the reactive cysteines and the protein is inactive.

The protein localises to the cytoplasm. In terms of biological role, redox regulated molecular chaperone. Protects both thermally unfolding and oxidatively damaged proteins from irreversible aggregation. Plays an important role in the bacterial defense system toward oxidative stress. The sequence is that of 33 kDa chaperonin from Pseudomonas aeruginosa (strain LESB58).